Consider the following 219-residue polypeptide: 3,4-dihydroxy-2-butanone 4-phosphate synthase (219 aa).

D-ribulose 5-phosphate contacts are provided by residues 37-38 (RE), D42, 150-154 (RRGHT), and E174. E38 is a Mg(2+) binding site. H153 is a binding site for Mg(2+).

This sequence belongs to the DHBP synthase family. As to quaternary structure, homodimer. Mg(2+) is required as a cofactor. The cofactor is Mn(2+).

The catalysed reaction is D-ribulose 5-phosphate = (2S)-2-hydroxy-3-oxobutyl phosphate + formate + H(+). It functions in the pathway cofactor biosynthesis; riboflavin biosynthesis; 2-hydroxy-3-oxobutyl phosphate from D-ribulose 5-phosphate: step 1/1. In terms of biological role, catalyzes the conversion of D-ribulose 5-phosphate to formate and 3,4-dihydroxy-2-butanone 4-phosphate. The polypeptide is 3,4-dihydroxy-2-butanone 4-phosphate synthase (Edwardsiella ictaluri (strain 93-146)).